The primary structure comprises 148 residues: Protein SOB FIVE-LIKE 1 (148 aa).

Residues 1–10 are compositionally biased toward basic and acidic residues; it reads MESPRNHGGS. Disordered regions lie at residues 1-20 and 33-148; these read MESPRNHGGSEEEEYSSCES and NDQS…SKTK. Positions 20-25 match the SOFL-A motif; it reads SGWTMY. A compositionally biased stretch (acidic residues) spans 54-76; that stretch reads DGYENDDGDTSDDGGDEESDDSM. The SOFL-B motif lies at 75–84; it reads SMASDASSGP. Positions 91-101 are enriched in basic residues; the sequence is HINKHAARKNG. The span at 111–128 shows a compositional bias: basic and acidic residues; the sequence is QHTEKTISNEGEKSDLKA.

Belongs to the SOFL plant protein family. In terms of tissue distribution, predominantly expressed in the vascular tissues of seedlings, developing leaves, flowers and siliques, but barely detectable in roots and stems.

The protein resides in the cytoplasm. It localises to the nucleus. In terms of biological role, involved in cytokinin-mediated development. Together with SOFL2, triggers the endogenous content of specific bioactive cytokinins derived from the biosynthetic intermediates trans-zeatin riboside monophosphate (tZRMP) and N(6)-(Delta(2)-isopentenyl)adenosine monophosphate (iPRMP) such as N-glucosides trans-zeatin 7-glucoside (tZ7G), cis-zeatin 7-glucoside (cZ7G) and N(6)-(Delta(2)-isopentenyl)adenine 7-glucoside (iP7G). The sequence is that of Protein SOB FIVE-LIKE 1 from Arabidopsis thaliana (Mouse-ear cress).